The chain runs to 281 residues: MAIKHYKPTTNGRRNMTSLDYKHNLSGDKPTKSLLRILKNSAGRNNQGKITVRHHGGRVKRFYRLVDFKRNKDNIPAVVKTIEYDPNRSANICLLAYADGEKRYIIAPKGIKVGQKVVSGEGADIIVGNSLPLSNIPEGTFIHNIEMQPGGGAKLARSAGTSAQILGKDDNGKYVVVKLKSGETRRILARCRATVGMVGNEEYSLVNVGKAGINRHRGIRPTVRGSVMNPVDHPHGGGEGKQPVGRKSPLTPWGKIALGVKTRKTKKSSNKLILRRRKDAK.

Residues 223 to 281 are disordered; it reads VRGSVMNPVDHPHGGGEGKQPVGRKSPLTPWGKIALGVKTRKTKKSSNKLILRRRKDAK. The segment covering 261 to 281 has biased composition (basic residues); the sequence is KTRKTKKSSNKLILRRRKDAK.

It belongs to the universal ribosomal protein uL2 family. Part of the 50S ribosomal subunit. Forms a bridge to the 30S subunit in the 70S ribosome.

Its function is as follows. One of the primary rRNA binding proteins. Required for association of the 30S and 50S subunits to form the 70S ribosome, for tRNA binding and peptide bond formation. It has been suggested to have peptidyltransferase activity; this is somewhat controversial. Makes several contacts with the 16S rRNA in the 70S ribosome. This chain is Large ribosomal subunit protein uL2, found in Mycoplasmopsis synoviae (strain 53) (Mycoplasma synoviae).